Consider the following 96-residue polypeptide: Small ribosomal subunit protein uS19 (96 aa).

The protein belongs to the universal ribosomal protein uS19 family.

Protein S19 forms a complex with S13 that binds strongly to the 16S ribosomal RNA. In Koribacter versatilis (strain Ellin345), this protein is Small ribosomal subunit protein uS19.